The following is a 224-amino-acid chain: Glutathione S-transferase U1 (224 aa).

Residues Glu6–Pro85 enclose the GST N-terminal domain. Glutathione-binding positions include Ser16–Pro17, Asn42–Lys43, Lys56–Val57, and Glu69–Ser70. Positions Asp90–Ile217 constitute a GST C-terminal domain. Thr151 carries the phosphothreonine modification.

It belongs to the GST superfamily. Tau family.

The protein localises to the cytoplasm. Its subcellular location is the cytosol. The catalysed reaction is RX + glutathione = an S-substituted glutathione + a halide anion + H(+). Functionally, may be involved in the conjugation of reduced glutathione to a wide number of exogenous and endogenous hydrophobic electrophiles and have a detoxification role against certain herbicides. The sequence is that of Glutathione S-transferase U1 (GSTU1) from Arabidopsis thaliana (Mouse-ear cress).